The chain runs to 477 residues: MWMFSWLCAILIILAIAGMNTIAKTTPHTKFTKKSEEREMPKGLKPSSGPPPEEEETLFTEMAEMAEPITKPSALDSVFGTATLSPFENFTLDPADFFLNCCDCCSPVPGQKGEPGETGQPGPKGEAGNLGIPGPPGVVGPQGPRGYKGEKGLKGERGDQGVPGYPGKPGAQGEPGPKGDKGNIGLGGVKGQKGSKGDTCGNCTKGEKGDQGAMGSPGLHGGPGAKGEKGEMGEKGEMGDKGCCGDSGERGGKGQKGEGGMKGEKGSKGDSGMEGKSGRNGLPGAKGDPGIKGEKGELGPPGLLGPTGPKGDIGNKGVRGPTGKKGSRGFKGSKGELARVPRSAFSAGLSKPFPPPNIPIKFEKILYNDQGNYSPVTGKFNCSIPGTYVFSYHITVRGRPARISLVAQNKKQFKSRETLYGQEIDQASLLVILKLSAGDQVWLEVSKDWNGVYVSAEDDSIFTGFLLYPEETSGISP.

Residues Met-1–Ala-23 form the signal peptide. Disordered stretches follow at residues His-28 to Glu-55 and Gln-111 to Leu-337. A compositionally biased stretch (basic and acidic residues) spans Lys-33 to Lys-42. The region spanning Gly-116–Pro-175 is the Collagen-like 1 domain. Residues Pro-133 and Pro-136 each carry the hydroxyproline modification. The span at Tyr-147 to Asp-159 shows a compositional bias: basic and acidic residues. Hydroxyproline occurs at positions 163, 166, and 169. Lys-178 carries the post-translational modification 5-hydroxylysine. The O-linked (Gal...) hydroxylysine glycan is linked to Lys-178. A compositionally biased stretch (gly residues) spans Gly-182–Gly-191. An N-linked (GlcNAc...) asparagine glycan is attached at Asn-202. 2 consecutive Collagen-like domains span residues Gly-209–Lys-268 and Gly-278–Leu-337. A Hydroxyproline modification is found at Pro-223. 2 stretches are compositionally biased toward basic and acidic residues: residues Lys-226–Asp-240 and Ser-247–Ser-277. Residues Pro-283 and Pro-301 each carry the hydroxyproline modification. Residues Leu-298–Lys-310 are compositionally biased toward low complexity. A 5-hydroxylysine modification is found at Lys-310. Lys-310 carries an O-linked (Gal...) hydroxylysine glycan. The C1q domain maps to Ala-338–Ser-473. An N-linked (GlcNAc...) asparagine glycan is attached at Asn-381.

Belongs to the OTOL1 family. Homooligomer; disulfide-linked; probably forms homotrimers. Interacts with OC90. Interacts with CBLN1.

It localises to the secreted. The protein localises to the extracellular space. It is found in the extracellular matrix. Collagen-like protein specifically expressed in the inner ear, which provides an organic scaffold for otoconia, a calcium carbonate structure in the saccule and utricle of the ear. Acts as a scaffold for biomineralization: sequesters calcium and forms interconnecting fibrils between otoconia that are incorporated into the calcium crystal structure. Together with OC90, modulates calcite crystal morphology and growth kinetics. This chain is Otolin-1, found in Homo sapiens (Human).